Reading from the N-terminus, the 79-residue chain is Sec-independent protein translocase protein TatA (79 aa).

The helical transmembrane segment at methionine 1–glycine 21 threads the bilayer. Positions isoleucine 43–serine 52 are enriched in basic and acidic residues. The disordered stretch occupies residues isoleucine 43–alanine 79.

Belongs to the TatA/E family. As to quaternary structure, the Tat system comprises two distinct complexes: a TatABC complex, containing multiple copies of TatA, TatB and TatC subunits, and a separate TatA complex, containing only TatA subunits. Substrates initially bind to the TatABC complex, which probably triggers association of the separate TatA complex to form the active translocon.

Its subcellular location is the cell membrane. Functionally, part of the twin-arginine translocation (Tat) system that transports large folded proteins containing a characteristic twin-arginine motif in their signal peptide across membranes. TatA could form the protein-conducting channel of the Tat system. The chain is Sec-independent protein translocase protein TatA from Mycobacterium sp. (strain JLS).